A 91-amino-acid chain; its full sequence is Insertion element IS1 1 protein InsA (91 aa).

Belongs to the IS1 elements InsA family.

Absolutely required for transposition of IS1. The protein is Insertion element IS1 1 protein InsA (insA1) of Escherichia coli (strain K12).